The sequence spans 328 residues: GMP reductase (328 aa).

Cys-176 serves as the catalytic Thioimidate intermediate. Ile-205–Ile-228 serves as a coordination point for NADP(+).

This sequence belongs to the IMPDH/GMPR family. GuaC type 2 subfamily.

The enzyme catalyses IMP + NH4(+) + NADP(+) = GMP + NADPH + 2 H(+). Its function is as follows. Catalyzes the irreversible NADPH-dependent deamination of GMP to IMP. It functions in the conversion of nucleobase, nucleoside and nucleotide derivatives of G to A nucleotides, and in maintaining the intracellular balance of A and G nucleotides. The polypeptide is GMP reductase (Streptococcus pneumoniae serotype 19F (strain G54)).